Reading from the N-terminus, the 161-residue chain is MGDIMTLKLLKEENGLSPMLREFRTLVRDSNIEKVAFVGSVGVCQPFAELFGYAIRDKECYFIPDGDLNKVKKLVIKDIGMQMEDFENLNKVDAIVLFGGLAMPKYGVEVDKIKELINKLSPKKVIGVCFMSIFQKAGWDKEIDFDYLMDGFIKVSIYCKD.

It to M.thermoautotrophicum MTH862.

This is an uncharacterized protein from Methanocaldococcus jannaschii (strain ATCC 43067 / DSM 2661 / JAL-1 / JCM 10045 / NBRC 100440) (Methanococcus jannaschii).